The following is a 454-amino-acid chain: MLKYRSLPIKRAIHHPAPGITPISPRIMVSRLRVIPSFNLKFNRWNSSVPESSKKELKTTDGNQESASKVSPVKEKEKVPFKVKMQKALRHYWDGSKLLGLEIKISSKLLMKSAAGYPLTRRENLQLKRTTQDIVRLVPFAAFLIIPFAELLLPFALKLFPNLLPSTYESSKKRENKLENLRNTRKLMSEIIKNNKSHFKPNNISEEQKALFNRFYTHVRATGVPESRQQLIEVARLFTDDTVLDNVTRPYLIALAKYMNLQPFGTDVMLRYRIRYKMLELKKDDLSIYYEDAEQLSLSELKTACASRGIRSVDVEPSVLYSNLRLWLNMRLKDKIPSTLLIMATAYNYGNVQSKESLYDALCDVLIGIPDELYHEVKVNVVKEDEASAKQKLKQLREQEEIMKEEEQQEENAIVSVKDELSLDDQDKNIDAAAPDVKPHDTKPIGEAAAIKEK.

A mitochondrion-targeting transit peptide spans 1–45 (MLKYRSLPIKRAIHHPAPGITPISPRIMVSRLRVIPSFNLKFNRW). Topologically, residues 46-136 (NSSVPESSKK…LKRTTQDIVR (91 aa)) are mitochondrial intermembrane. Residues 51–73 (ESSKKELKTTDGNQESASKVSPV) are disordered. The helical transmembrane segment at 137 to 157 (LVPFAAFLIIPFAELLLPFAL) threads the bilayer. The Mitochondrial matrix portion of the chain corresponds to 158–454 (KLFPNLLPST…IGEAAAIKEK (297 aa)). The Letm1 RBD domain maps to 177-371 (KLENLRNTRK…LCDVLIGIPD (195 aa)). The stretch at 376-423 (EVKVNVVKEDEASAKQKLKQLREQEEIMKEEEQQEENAIVSVKDELSL) forms a coiled coil. Basic and acidic residues-rich tracts occupy residues 420 to 430 (ELSLDDQDKNI) and 437 to 454 (VKPH…IKEK). The tract at residues 420-454 (ELSLDDQDKNIDAAAPDVKPHDTKPIGEAAAIKEK) is disordered.

Associates with the mitochondrial ribosomes.

It is found in the mitochondrion inner membrane. Involved in mitochondrial potassium homeostasis through the mitochondrial K(+)/H(+) exchange regulation. This is LETM1 domain-containing protein YLH47, mitochondrial (YLH47) from Saccharomyces cerevisiae (strain ATCC 204508 / S288c) (Baker's yeast).